A 419-amino-acid polypeptide reads, in one-letter code: Putative trans-acting enoyl reductase MT2525 (419 aa).

K127 participates in a covalent cross-link: Isoglutamyl lysine isopeptide (Lys-Gln) (interchain with Q-Cter in protein Pup). Residues 197–232 (NDPDARRQLSDPYMLSPDRGAEPELGPQPDLPSRRG) form a disordered region. A helical transmembrane segment spans residues 284-304 (VLAPVVSVVGGGVGNAMFGLA).

The protein belongs to the saccharopine dehydrogenase family. Enoyl reductase subfamily.

The protein resides in the cell membrane. This is Putative trans-acting enoyl reductase MT2525 from Mycobacterium tuberculosis (strain CDC 1551 / Oshkosh).